A 266-amino-acid chain; its full sequence is Early E1A protein (266 aa).

The interval 39–47 (MSLHEMYDL) is interaction with RB1 in competition with E2F1. The PXLXP motif, interaction with host ZMYND11 motif lies at 94–98 (PELQP). Residues 103–107 (LFCYE) carry the LXCXE motif, interaction with host RB1 motif. A zinc finger spans residues 160–180 (CSSCDYHRKTSGCPEILCSLC). Positions 193 to 244 (VSDSEPDEPDSTTADSNHGSPPTLRCTPPRDLPRPVPVKASPGKRPAVNSLH) are disordered. The span at 203 to 212 (STTADSNHGS) shows a compositional bias: polar residues. The PXDLS motif, CTBP-binding motif lies at 255-259 (PLDLS). A Nuclear localization signal motif is present at residues 261-265 (KRSRS).

Belongs to the adenoviridae E1A protein family. In terms of assembly, interacts with host UBE2I; this interaction interferes with polySUMOylation. Interacts with host RB1; this interaction induces the aberrant dissociation of RB1-E2F1 complex thereby disrupting the activity of RB1 and activating E2F1-regulated genes. Interacts with host ATF7; the interaction enhances ATF7-mediated viral transactivation activity which requires the zinc binding domains of both proteins. Isoform early E1A 32 kDa protein and isoform early E1A 26 kDa protein interact (via N-terminus) with CUL1 and E3 ubiquitin ligase RBX1; these interactions inhibit RBX1-CUL1-dependent elongation reaction of ubiquitin chains and attenuate ubiquitination of SCF(FBXW7) target proteins. Interacts (via PXLXP motif) with host ZMYND11/BS69 (via MYND-type zinc finger); this interaction inhibits E1A mediated transactivation. Interacts with host EP300; this interaction stimulates the acetylation of RB1 by recruiting EP300 and RB1 into a multimeric-protein complex. Interacts with host CTBP1 and CTBP2; this interaction seems to potentiate viral replication. Interacts with host DCAF7. Interacts with host DYRK1A. Interacts with host KPNA4; this interaction allows E1A import into the host nucleus. Interacts with host EP400; this interaction stabilizes MYC. Interacts with host TBP protein; this interaction probably disrupts the TBP-TATA complex.

It localises to the host nucleus. Functionally, plays a role in viral genome replication by driving entry of quiescent cells into the cell cycle. Stimulation of progression from G1 to S phase allows the virus to efficiently use the cellular DNA replicating machinery to achieve viral genome replication. E1A protein has both transforming and trans-activating activities. Induces the disassembly of the E2F1 transcription factor from RB1 by direct competition for the same binding site on RB1, with subsequent transcriptional activation of E2F1-regulated S-phase genes and of the E2 region of the adenoviral genome. Release of E2F1 leads to the ARF-mediated inhibition of MDM2 and causes TP53/p53 to accumulate because it is not targeted for degradation by MDM2-mediated ubiquitination anymore. This increase in TP53, in turn, would arrest the cell proliferation and direct its death but this effect is counteracted by the viral protein E1B-55K. Inactivation of the ability of RB1 to arrest the cell cycle is critical for cellular transformation, uncontrolled cellular growth and proliferation induced by viral infection. Interaction with RBX1 and CUL1 inhibits ubiquitination of the proteins targeted by SCF(FBXW7) ubiquitin ligase complex, and may be linked to unregulated host cell proliferation. The tumorigenesis-restraining activity of E1A may be related to the disruption of the host CtBP-CtIP complex through the CtBP binding motif. The chain is Early E1A protein from Simian adenovirus serotype 7 (SAdV-7).